The primary structure comprises 302 residues: Sulfate adenylyltransferase subunit 2 (302 aa).

It belongs to the PAPS reductase family. CysD subfamily. Heterodimer composed of CysD, the smaller subunit, and CysN.

The catalysed reaction is sulfate + ATP + H(+) = adenosine 5'-phosphosulfate + diphosphate. It functions in the pathway sulfur metabolism; hydrogen sulfide biosynthesis; sulfite from sulfate: step 1/3. With CysN forms the ATP sulfurylase (ATPS) that catalyzes the adenylation of sulfate producing adenosine 5'-phosphosulfate (APS) and diphosphate, the first enzymatic step in sulfur assimilation pathway. APS synthesis involves the formation of a high-energy phosphoric-sulfuric acid anhydride bond driven by GTP hydrolysis by CysN coupled to ATP hydrolysis by CysD. This is Sulfate adenylyltransferase subunit 2 from Baumannia cicadellinicola subsp. Homalodisca coagulata.